The sequence spans 59 residues: UPF0391 membrane protein GbCGDNIH1_2123 (59 aa).

Transmembrane regions (helical) follow at residues 6-26 and 35-55; these read LALFFLVVSLIAGLFGFTGIS and ILFVIFLIVFVVLLVMALAAG.

This sequence belongs to the UPF0391 family.

The protein resides in the cell membrane. The protein is UPF0391 membrane protein GbCGDNIH1_2123 of Granulibacter bethesdensis (strain ATCC BAA-1260 / CGDNIH1).